A 408-amino-acid chain; its full sequence is Succinylornithine transaminase (408 aa).

K252 carries the N6-(pyridoxal phosphate)lysine modification.

The protein belongs to the class-III pyridoxal-phosphate-dependent aminotransferase family. AstC subfamily. Pyridoxal 5'-phosphate serves as cofactor.

It catalyses the reaction N(2)-succinyl-L-ornithine + 2-oxoglutarate = N-succinyl-L-glutamate 5-semialdehyde + L-glutamate. The protein operates within amino-acid degradation; L-arginine degradation via AST pathway; L-glutamate and succinate from L-arginine: step 3/5. In terms of biological role, catalyzes the transamination of N(2)-succinylornithine and alpha-ketoglutarate into N(2)-succinylglutamate semialdehyde and glutamate. Can also act as an acetylornithine aminotransferase. This is Succinylornithine transaminase from Salmonella typhi.